The primary structure comprises 108 residues: Pumilarin (108 aa).

Residues Met-1 to Asp-38 constitute a propeptide that is removed on maturation. Positions Leu-39–Trp-108 form a cross-link, cyclopeptide (Leu-Trp).

Post-translationally, the cross-link permits a high resistance to proteolysis. Is more resistant to specific proteases than to unspecific proteases.

The protein resides in the secreted. Its function is as follows. Cyclopeptide antibiotic that inhibits both Gram-positive and Gram-negative bacteria. Shows potent to weak activities against M.flavus (MIC=3 ug/ml), B.cereus (MIC=12 ug/ml), B.pumilus (MIC=12 ug/ml), E.coli (MIC=12 ug/ml), and S.pneumoniae (MIC=47 ug/ml). May act by forming pores. This chain is Pumilarin, found in Bacillus safensis.